The primary structure comprises 24 residues: 60 kDa chaperonin, mitochondrial (24 aa).

Belongs to the chaperonin (HSP60) family. Forms a single seven-member ring complex, in tight association with the p63 protein. As to expression, testis.

It is found in the mitochondrion. Implicated in mitochondrial protein import and macromolecular assembly. May facilitate the correct folding of imported proteins. May also prevent misfolding and promote the refolding and proper assembly of unfolded polypeptides generated under stress conditions in the mitochondrial matrix. In Heliothis virescens (Tobacco budworm moth), this protein is 60 kDa chaperonin, mitochondrial.